A 246-amino-acid polypeptide reads, in one-letter code: Probable transcriptional regulatory protein Dshi_2762 (246 aa).

It belongs to the TACO1 family.

Its subcellular location is the cytoplasm. The polypeptide is Probable transcriptional regulatory protein Dshi_2762 (Dinoroseobacter shibae (strain DSM 16493 / NCIMB 14021 / DFL 12)).